Here is a 22-residue protein sequence, read N- to C-terminus: Leptoglycin (22 aa).

The tract at residues 1–22 is disordered; sequence GLLGGLLGPLLGGGGGGGGGLL.

Expressed by the skin glands.

The protein localises to the secreted. Its function is as follows. Antimicrobial protein. Has antibacterial activity against the Gram-negative bacteria E.coli ATCC 28922 (MIC=50 uM), P.aeruginosa ATCC 9027 (MIC=8 uM) and C.freundii ATCC 8090 (MIC=75 uM). Does not have hemolytic activity. This is Leptoglycin from Leptodactylus pentadactylus (Smokey jungle frog).